Here is a 206-residue protein sequence, read N- to C-terminus: tRNA (guanine-N(7)-)-methyltransferase (206 aa).

The S-adenosyl-L-methionine site is built by glutamate 37, glutamate 62, aspartate 89, and aspartate 112. Aspartate 112 is a catalytic residue. Substrate contacts are provided by lysine 116 and aspartate 148.

The protein belongs to the class I-like SAM-binding methyltransferase superfamily. TrmB family.

The catalysed reaction is guanosine(46) in tRNA + S-adenosyl-L-methionine = N(7)-methylguanosine(46) in tRNA + S-adenosyl-L-homocysteine. It participates in tRNA modification; N(7)-methylguanine-tRNA biosynthesis. Catalyzes the formation of N(7)-methylguanine at position 46 (m7G46) in tRNA. The chain is tRNA (guanine-N(7)-)-methyltransferase from Myxococcus xanthus (strain DK1622).